We begin with the raw amino-acid sequence, 331 residues long: Large ribosomal subunit protein uL3 (331 aa).

It belongs to the universal ribosomal protein uL3 family. Part of the 50S ribosomal subunit. Forms a cluster with proteins L14 and L24e.

One of the primary rRNA binding proteins, it binds directly near the 3'-end of the 23S rRNA, where it nucleates assembly of the 50S subunit. The sequence is that of Large ribosomal subunit protein uL3 from Archaeoglobus fulgidus (strain ATCC 49558 / DSM 4304 / JCM 9628 / NBRC 100126 / VC-16).